The sequence spans 463 residues: Methionine aminopeptidase 2-1 (463 aa).

The segment covering 1 to 12 (MGSKTPDGHRQG) has biased composition (basic and acidic residues). Residues 1–96 (MGSKTPDGHR…SGQQTTPPRV (96 aa)) form a disordered region. A compositionally biased stretch (acidic residues) spans 41-53 (SGEDDEDGDDDEE). The segment covering 58–67 (DLNSRAQPNN) has biased composition (polar residues). The span at 70–85 (KKRKRKNNKKKKKKRP) shows a compositional bias: basic residues. A substrate-binding site is contributed by histidine 215. A divalent metal cation is bound by residues aspartate 236, aspartate 247, and histidine 316. Position 324 (histidine 324) interacts with substrate. The a divalent metal cation site is built by glutamate 349 and glutamate 444.

It belongs to the peptidase M24A family. Methionine aminopeptidase eukaryotic type 2 subfamily. The cofactor is Co(2+). Zn(2+) serves as cofactor. It depends on Mn(2+) as a cofactor. Requires Fe(2+) as cofactor.

Its subcellular location is the cytoplasm. It carries out the reaction Release of N-terminal amino acids, preferentially methionine, from peptides and arylamides.. In terms of biological role, cotranslationally removes the N-terminal methionine from nascent proteins. The N-terminal methionine is often cleaved when the second residue in the primary sequence is small and uncharged (Met-Ala-, Cys, Gly, Pro, Ser, Thr, or Val). This is Methionine aminopeptidase 2-1 from Arthroderma otae (strain ATCC MYA-4605 / CBS 113480) (Microsporum canis).